The chain runs to 399 residues: Bone morphogenetic protein 8A (399 aa).

Residues 1 to 19 (MAMRPGPLWLLGLALCALG) form the signal peptide. The propeptide occupies 20–260 (GGHGPRPPHT…ASQSPVRAPR (241 aa)). N155 carries an N-linked (GlcNAc...) asparagine glycan. Positions 257–286 (RAPRAARPLKRRQPKKTNELPHPNKLPGIF) are disordered. Intrachain disulfides connect C298-C364, C327-C396, and C331-C398. An N-linked (GlcNAc...) asparagine glycan is attached at N340.

This sequence belongs to the TGF-beta family. Homodimer; disulfide-linked. In terms of tissue distribution, expressed in testis. expressed in trophoblast cells of the labyrinthine region of the placenta and in the inner root sheath of hair follicles of early postnatal skin. Expressed predominantly in the neonatal mouse spermatogonia.

Its subcellular location is the secreted. Functionally, growth factor of the TGF-beta superfamily that plays important role in various biological processes, including spermatogenesis, osteogenesis, steroidogenesis as well as regulation of energy balance. Initiates the canonical BMP signaling cascade by associating with type I receptor BMPR1A and type II receptor BMPR2. Once all three components are bound together in a complex at the cell surface, BMPR2 phosphorylates and activates BMPR1A. In turn, BMPR1A propagates signal by phosphorylating SMAD1/5/8 that travel to the nucleus and act as activators and repressors of transcription of target genes. In addition, activates the SMAD2/3 pathway. The protein is Bone morphogenetic protein 8A (Bmp8a) of Mus musculus (Mouse).